Reading from the N-terminus, the 360-residue chain is Chorismate synthase (360 aa).

Residues R48 and R54 each coordinate NADP(+). FMN contacts are provided by residues 125-127 (RSS), 242-243 (NG), G283, 298-302 (KPTSS), and R324.

The protein belongs to the chorismate synthase family. In terms of assembly, homotetramer. It depends on FMNH2 as a cofactor.

The catalysed reaction is 5-O-(1-carboxyvinyl)-3-phosphoshikimate = chorismate + phosphate. It functions in the pathway metabolic intermediate biosynthesis; chorismate biosynthesis; chorismate from D-erythrose 4-phosphate and phosphoenolpyruvate: step 7/7. Its function is as follows. Catalyzes the anti-1,4-elimination of the C-3 phosphate and the C-6 proR hydrogen from 5-enolpyruvylshikimate-3-phosphate (EPSP) to yield chorismate, which is the branch point compound that serves as the starting substrate for the three terminal pathways of aromatic amino acid biosynthesis. This reaction introduces a second double bond into the aromatic ring system. This is Chorismate synthase from Gluconobacter oxydans (strain 621H) (Gluconobacter suboxydans).